Reading from the N-terminus, the 223-residue chain is Adenylate kinase 4, mitochondrial (223 aa).

15–20 (GSGKGT) contacts a ribonucleoside 5'-triphosphate. The interval 35–64 (SSGHFLRENIKANTEVGDMAKQYIEKGLLV) is NMP. AMP contacts are provided by Ser-36 and Arg-41. Lys-60 carries the N6-succinyllysine modification. Residues 62 to 64 (LLV), 89 to 92 (GFPR), and Gln-96 contribute to the AMP site. The tract at residues 125-162 (RRWIHPPSGRVYNLDFNPPHVHGMDDVTGEPLVQQEDD) is LID. Residues Arg-126 and 135-136 (VY) each bind a ribonucleoside 5'-triphosphate. Arg-170 lines the AMP pocket. Lys-175 carries the post-translational modification N6-acetyllysine. Lys-179 and Lys-186 each carry N6-acetyllysine; alternate. An N6-succinyllysine; alternate mark is found at Lys-179 and Lys-186. Residue Thr-199 participates in a ribonucleoside 5'-triphosphate binding.

It belongs to the adenylate kinase family. AK3 subfamily. Monomer. Interacts with SLC25A5/ANT2.

The protein localises to the mitochondrion matrix. It catalyses the reaction a ribonucleoside 5'-phosphate + ATP = a ribonucleoside 5'-diphosphate + ADP. The enzyme catalyses AMP + ATP = 2 ADP. The catalysed reaction is GTP + AMP = GDP + ADP. It carries out the reaction CMP + ATP = CDP + ADP. It catalyses the reaction GTP + CMP = CDP + GDP. The enzyme catalyses dAMP + ATP = dADP + ADP. The catalysed reaction is dCMP + ATP = dCDP + ADP. It carries out the reaction a 2'-deoxyribonucleoside 5'-diphosphate + ATP = a 2'-deoxyribonucleoside 5'-triphosphate + ADP. It catalyses the reaction a ribonucleoside 5'-diphosphate + ATP = a ribonucleoside 5'-triphosphate + ADP. The enzyme catalyses GDP + ATP = GTP + ADP. The catalysed reaction is CDP + GTP = CTP + GDP. It carries out the reaction CDP + ATP = CTP + ADP. It catalyses the reaction UDP + ATP = UTP + ADP. The enzyme catalyses GTP + UDP = UTP + GDP. The catalysed reaction is dADP + GTP = dATP + GDP. It carries out the reaction dCDP + GTP = dCTP + GDP. It catalyses the reaction dCDP + ATP = dCTP + ADP. The enzyme catalyses dGDP + ATP = dGTP + ADP. The catalysed reaction is dTDP + GTP = dTTP + GDP. It carries out the reaction dTDP + ATP = dTTP + ADP. Its function is as follows. Broad-specificity mitochondrial nucleoside phosphate kinase involved in cellular nucleotide homeostasis by catalyzing nucleoside-phosphate interconversions. Similar to other adenylate kinases, preferentially catalyzes the phosphorylation of the nucleoside monophosphate AMP with ATP as phosphate donor to produce ADP. Phosphorylates only AMP when using GTP as phosphate donor. In vitro, can also catalyze the phosphorylation of CMP, dAMP and dCMP and use GTP as an alternate phosphate donor. Moreover, exhibits a diphosphate kinase activity, producing ATP, CTP, GTP, UTP, TTP, dATP, dCTP and dGTP from the corresponding diphosphate substrates with either ATP or GTP as phosphate donors. Plays a role in controlling cellular ATP levels by regulating phosphorylation and activation of the energy sensor protein kinase AMPK. Plays a protective role in the cellular response to oxidative stress. This chain is Adenylate kinase 4, mitochondrial, found in Bos taurus (Bovine).